A 428-amino-acid chain; its full sequence is MVDSLTLQPVALVNGTVNLPGSKSVSNRALLLAALAEGTTTLTNLLDSDDVRHMLNALQALGVSYQLSDDRTTCKVDGVGGPLVASKPLELFLGNAGTAMRPLAAALCLGSNDVVLTGEPRMKERPIGHLVDALRQGGAQIDYLEQTDYPPLRLRGGFRGGDVTVDGSVSSQFLTALLMTAPLAEQDTHIHIKGELVSKPYIDITLHLMRTFGVEVSHDNYRVFHINGRQTYRSPGDYLVEGDASSASYFLAAAAIKGGTVRVTGIGKKSVQGDTKFADVLEKMGARITWGDDYIECSRGELRGIDMDMNHIPDAAMTIATAALFAEGPTTIRNIYNWRVKETDRLAAMATELRKVGAEVDEGEDYIHVVPPAKLKFADIGTYNDHRMAMCFSLVALSDTPVTILDPKCTAKTFPDYFEQLARISQLA.

3-phosphoshikimate contacts are provided by K23, S24, and R28. K23 lines the phosphoenolpyruvate pocket. Phosphoenolpyruvate is bound by residues G97 and R125. Residues S170, S171, Q172, S198, D314, N337, and K341 each coordinate 3-phosphoshikimate. Position 172 (Q172) interacts with phosphoenolpyruvate. D314 (proton acceptor) is an active-site residue. Residues R345, R387, and K412 each coordinate phosphoenolpyruvate.

The protein belongs to the EPSP synthase family. As to quaternary structure, monomer.

The protein resides in the cytoplasm. The catalysed reaction is 3-phosphoshikimate + phosphoenolpyruvate = 5-O-(1-carboxyvinyl)-3-phosphoshikimate + phosphate. The protein operates within metabolic intermediate biosynthesis; chorismate biosynthesis; chorismate from D-erythrose 4-phosphate and phosphoenolpyruvate: step 6/7. Its function is as follows. Catalyzes the transfer of the enolpyruvyl moiety of phosphoenolpyruvate (PEP) to the 5-hydroxyl of shikimate-3-phosphate (S3P) to produce enolpyruvyl shikimate-3-phosphate and inorganic phosphate. The sequence is that of 3-phosphoshikimate 1-carboxyvinyltransferase from Serratia proteamaculans (strain 568).